A 232-amino-acid chain; its full sequence is Sugar fermentation stimulation protein homolog (232 aa).

The protein belongs to the SfsA family.

The chain is Sugar fermentation stimulation protein homolog from Geobacter sulfurreducens (strain ATCC 51573 / DSM 12127 / PCA).